The sequence spans 610 residues: MARISFSCLFPASWHCSLPSVTQFSRQRVALLIISVAVFILVFAAVADLQLWSSRAFRDRQFRRYLDQIEDLEATDTKDTKLNYGVVVDCGSSGSRVFVYFWPPHNGNPHDLLDIKQMRDRGSKPVVKKIKPGISTMALTPEKSSDYINPLLSFAASYIPKHKHKETPLYILCTAGMRILPESQQIAILQDLVKDVPQEFDFLFSEAHAEVISGKQEGVYAWISINFVLGRFDHVVDEEDAVVAVTIGTQEESIIRKRTVGVIDMGGGSLQIAYEVPTTMTYPSVEHEEVAKSMLAEFNLGCDLQHTEHVYRVYVTTFMGFGGNFARQRYEDMVFNDTITKNRIQGQQIGVHPNSPLQDPCLPVGLIDQVRRQSHDLHVLGKGNWDSCRQQLEPLLLKSNDTQAYLNSVYQPSIDFSNSEFYGFSEFFYCTEDVLRMGGIYNSQKFAKAAKEYCSMPWTTLQDRFNSGLYSSHADQHRLKYQCFKSAWMFSILHNGFHFPHEYPNFKTAQLVYDKEVQWTLGAILYKTRFLPLRDIRQESSRPAHVSWFRISFVYNHYLFFACILVVLLSIVLYILRLRRIHRRQARASALDLLLMEEGVHTVLEPGIPT.

Residues 1-28 are Cytoplasmic-facing; the sequence is MARISFSCLFPASWHCSLPSVTQFSRQR. A helical membrane pass occupies residues 29-49; the sequence is VALLIISVAVFILVFAAVADL. The Vesicular segment spans residues 50 to 555; the sequence is QLWSSRAFRD…VSWFRISFVY (506 aa). The active-site Proton acceptor is glutamate 217. N-linked (GlcNAc...) asparagine glycosylation is found at asparagine 336 and asparagine 400. Cysteine 454 and cysteine 483 are disulfide-bonded. A helical transmembrane segment spans residues 556–576; it reads NHYLFFACILVVLLSIVLYIL. The Cytoplasmic segment spans residues 577-610; the sequence is RLRRIHRRQARASALDLLLMEEGVHTVLEPGIPT.

This sequence belongs to the GDA1/CD39 NTPase family. It depends on Ca(2+) as a cofactor. Mg(2+) serves as cofactor.

It is found in the cytoplasmic vesicle membrane. It catalyses the reaction a ribonucleoside 5'-triphosphate + H2O = a ribonucleoside 5'-diphosphate + phosphate + H(+). The catalysed reaction is UTP + H2O = UDP + phosphate + H(+). It carries out the reaction GTP + H2O = GDP + phosphate + H(+). The enzyme catalyses CTP + H2O = CDP + phosphate + H(+). Catalyzes the hydrolysis of nucleoside triphosphates and diphosphates in a calcium- or magnesium-dependent manner. Preferentially hydrolyzes nucleoside 5'-triphosphates, with substrate preference for UTP &gt; GTP &gt; CTP. Hydrolyzes ATP and nucleoside diphosphates only to a minor extent. The chain is Ectonucleoside triphosphate diphosphohydrolase 7 (entpd7) from Xenopus tropicalis (Western clawed frog).